The chain runs to 309 residues: Taste receptor type 2 member 124 (309 aa).

Topologically, residues 1 to 7 are extracellular; sequence MVSVLHS. A helical transmembrane segment spans residues 8–28; sequence ISTIIIIAEFVWGNLSNGLIV. Topologically, residues 29 to 46 are cytoplasmic; it reads LKNCLDWINIKELSTLDQ. A helical membrane pass occupies residues 47–67; sequence ILILLAISRISLIWETLLMWV. Over 68–81 the chain is Extracellular; it reads KDKLISSITIEELK. The chain crosses the membrane as a helical span at residues 82-102; sequence MIMFSFMLSSHFSLWLATALS. At 103 to 127 the chain is on the cytoplasmic side; that stretch reads TFYLFRIANCSWQIFLYLKWRLKHL. A helical transmembrane segment spans residues 128-148; that stretch reads IVQMLLGSVMFLIANIIQITI. Over 149-182 the chain is Extracellular; it reads TLEKRFYQYKGNTSVNSIQNEFALLIEMMLFNMT. 2 N-linked (GlcNAc...) asparagine glycosylation sites follow: asparagine 160 and asparagine 180. A helical membrane pass occupies residues 183–203; sequence IFSVIPFLLALISFFLLIFSL. The Cytoplasmic portion of the chain corresponds to 204-227; sequence WKHLQRMQLNSREDRDPSTKAHRN. The helical transmembrane segment at 228–248 threads the bilayer; sequence ALGIMVSFLLLYTMYVLSLLI. The Extracellular segment spans residues 249-261; the sequence is SWIAQKNQSELVH. Residue asparagine 255 is glycosylated (N-linked (GlcNAc...) asparagine). A helical membrane pass occupies residues 262–282; the sequence is IICMITSLLNPSVHSSILILG. At 283–309 the chain is on the cytoplasmic side; it reads NFKLKQSSLCILRHLGCRLKSQNTPTT.

Belongs to the G-protein coupled receptor T2R family.

It localises to the membrane. Its function is as follows. Putative taste receptor which may play a role in the perception of bitterness. The polypeptide is Taste receptor type 2 member 124 (Rattus norvegicus (Rat)).